Reading from the N-terminus, the 316-residue chain is tRNA dimethylallyltransferase (316 aa).

13–20 is a binding site for ATP; that stretch reads GPTAVGKT. 15 to 20 is a substrate binding site; the sequence is TAVGKT. The tract at residues 38-41 is interaction with substrate tRNA; that stretch reads DSIQ.

The protein belongs to the IPP transferase family. In terms of assembly, monomer. It depends on Mg(2+) as a cofactor.

The catalysed reaction is adenosine(37) in tRNA + dimethylallyl diphosphate = N(6)-dimethylallyladenosine(37) in tRNA + diphosphate. Catalyzes the transfer of a dimethylallyl group onto the adenine at position 37 in tRNAs that read codons beginning with uridine, leading to the formation of N6-(dimethylallyl)adenosine (i(6)A). The chain is tRNA dimethylallyltransferase from Staphylococcus carnosus (strain TM300).